The sequence spans 142 residues: Endoribonuclease YbeY (142 aa).

Zn(2+) is bound by residues His-107, His-111, and Asp-117.

This sequence belongs to the endoribonuclease YbeY family. Zn(2+) serves as cofactor.

It is found in the cytoplasm. Its function is as follows. Single strand-specific metallo-endoribonuclease involved in late-stage 70S ribosome quality control and in maturation of the 3' terminus of the 16S rRNA. This Parabacteroides distasonis (strain ATCC 8503 / DSM 20701 / CIP 104284 / JCM 5825 / NCTC 11152) protein is Endoribonuclease YbeY.